The primary structure comprises 382 residues: Anhydro-N-acetylmuramic acid kinase (382 aa).

9-16 (GTSLDGID) is an ATP binding site.

Belongs to the anhydro-N-acetylmuramic acid kinase family.

It catalyses the reaction 1,6-anhydro-N-acetyl-beta-muramate + ATP + H2O = N-acetyl-D-muramate 6-phosphate + ADP + H(+). It functions in the pathway amino-sugar metabolism; 1,6-anhydro-N-acetylmuramate degradation. The protein operates within cell wall biogenesis; peptidoglycan recycling. In terms of biological role, catalyzes the specific phosphorylation of 1,6-anhydro-N-acetylmuramic acid (anhMurNAc) with the simultaneous cleavage of the 1,6-anhydro ring, generating MurNAc-6-P. Is required for the utilization of anhMurNAc either imported from the medium or derived from its own cell wall murein, and thus plays a role in cell wall recycling. This chain is Anhydro-N-acetylmuramic acid kinase, found in Bacillus cereus (strain ZK / E33L).